The primary structure comprises 67 residues: SSGPCCDRCRCTKSEPPQCQCQDVRLNSCHSACEACVCSHSMPGLCSCLDITHFCHEPCKSSGDDED.

7 disulfide bridges follow: Cys-5–Cys-59, Cys-6–Cys-21, Cys-9–Cys-55, Cys-11–Cys-19, Cys-29–Cys-36, Cys-33–Cys-48, and Cys-38–Cys-46.

This sequence belongs to the Bowman-Birk serine protease inhibitor family. As to quaternary structure, monomer. Although dimerization may occur in solution. As to expression, seed.

Its function is as follows. Inhibits trypsin but not chymotrypsin. The inhibitor consists of 2 domains and has 2 sites of interaction with trypsin. This Dioclea glabra protein is Bowman-Birk type proteinase inhibitor 1.